Reading from the N-terminus, the 66-residue chain is Alpha-bisabolene synthase (66 aa).

The protein belongs to the terpene synthase family. Tpsd subfamily. It depends on Mn(2+) as a cofactor. The cofactor is K(+).

It localises to the cytoplasm. The enzyme catalyses (2E,6E)-farnesyl diphosphate = (E,R)-alpha-bisabolene + diphosphate. The protein operates within terpene metabolism; oleoresin biosynthesis. In terms of biological role, involved in defensive oleoresin formation in conifers in response to insect attack or other injury. Involved in sesquiterpene (C15) olefins biosynthesis. The protein is Alpha-bisabolene synthase of Pseudotsuga menziesii (Douglas-fir).